The chain runs to 133 residues: Large ribosomal subunit protein bL19 (133 aa).

This sequence belongs to the bacterial ribosomal protein bL19 family.

This protein is located at the 30S-50S ribosomal subunit interface and may play a role in the structure and function of the aminoacyl-tRNA binding site. This Stenotrophomonas maltophilia (strain K279a) protein is Large ribosomal subunit protein bL19.